A 541-amino-acid chain; its full sequence is Carotenoid-cleaving dioxygenase, mitochondrial (541 aa).

Fe cation is bound by residues His188, His248, His319, and His535.

This sequence belongs to the carotenoid oxygenase family. It depends on Fe(2+) as a cofactor. In terms of tissue distribution, widely expressed. Detected in heart, spleen, lung, intestine, colon, stomach, kidney, bladder, and prostate. Highly expressed in liver and testis (at protein level).

The protein resides in the mitochondrion. The catalysed reaction is all-trans-beta-carotene + O2 = beta-ionone + all-trans-10'-apo-beta-carotenal. It carries out the reaction 5-cis-lycopene + O2 = 5-cis-10'-apo-lycopenal + (3E,5E)-6,10-dimethylundeca-3,5,9-trien-2-one. It catalyses the reaction 13-cis-lycopene + O2 = 13-cis-10'-apo-lycopenal + (3E,5E)-6,10-dimethylundeca-3,5,9-trien-2-one. The enzyme catalyses lutein + O2 = (3R,6R)-hydroxy-alpha-ionone + (3R)-3-hydroxy-10'-apo-beta-carotenal. The catalysed reaction is lutein + O2 = (3R,6R)-3-hydroxy-10'-apo-alpha-carotenal + (3R)-hydroxy-beta-ionone. It carries out the reaction all-trans-zeaxanthin + 2 O2 = 4,9-dimethyldodeca-2,4,6,8,10-pentaenedial + 2 (3R)-hydroxy-beta-ionone. It catalyses the reaction all-trans-zeaxanthin + O2 = (3R)-3-hydroxy-10'-apo-beta-carotenal + (3R)-hydroxy-beta-ionone. The enzyme catalyses beta-cryptoxanthin + O2 = all-trans-10'-apo-beta-carotenal + (3R)-hydroxy-beta-ionone. The catalysed reaction is all-trans-10'-apo-beta-carotenal + O2 = beta-ionone + 4,9-dimethyldodeca-2,4,6,8,10-pentaenedial. It carries out the reaction (3R)-3-hydroxy-10'-apo-beta-carotenal + O2 = 4,9-dimethyldodeca-2,4,6,8,10-pentaenedial + (3R)-hydroxy-beta-ionone. It catalyses the reaction (3R,6R)-3-hydroxy-10'-apo-alpha-carotenal + O2 = (3R,6R)-hydroxy-alpha-ionone + 4,9-dimethyldodeca-2,4,6,8,10-pentaenedial. Broad specificity mitochondrial dioxygenase that mediates the asymmetric oxidative cleavage of carotenoids. Cleaves carotenes (pure hydrocarbon carotenoids) such as all-trans-beta-carotene and lycopene as well as xanthophylls (oxygenated carotenoids) such as zeaxanthin, lutein and beta-cryptoxanthin at both the 9,10 and the 9',10' carbon-carbon double bond. Through its function in carotenoids metabolism regulates oxidative stress and the production of important signaling molecules. This chain is Carotenoid-cleaving dioxygenase, mitochondrial, found in Mustela putorius furo (European domestic ferret).